A 418-amino-acid chain; its full sequence is Protease LasA (418 aa).

Residues 1 to 31 (MQHKRSRAMASPRSPFLFVLLALAVGGTANA) form the signal peptide. The propeptide occupies 32 to 236 (HDDGLPAFRY…ARQLQAKAAL (205 aa)). Zn(2+)-binding residues include His259 and Asp272. Cys301 and Cys347 form a disulfide bridge. Residues His317 and His356 each act as proton donor/acceptor in the active site. His358 contributes to the Zn(2+) binding site. Cysteines 391 and 406 form a disulfide.

The protein belongs to the peptidase M23A family. Zn(2+) serves as cofactor. Post-translationally, processing of pro-LasA can occur extracellularly and requires elastase (lasB). Secretion and processing may be linked.

The protein resides in the secreted. Involved in proteolysis and elastolysis (degradation of the host protein elastin). Has staphylolytic activity (degrades pentaglycine cross-links in cell wall peptidoglycan), preferring Gly-Gly-|-X substrates where X is Ala or Gly. Enhances the elastolytic but not proteolytic activity of elastase (lasB) and elastolytic activity of other proteases. Degradation of host elastin is likely to contribute to the pathogenicity of P.aeruginosa. While either His-317 or His-356 can abstract a proton in the hydrolysis reaction, the same residue performs both functions in a given catalytic cycle, with the other stabilizing the catalytic intermediate. This chain is Protease LasA (lasA), found in Pseudomonas aeruginosa (strain ATCC 15692 / DSM 22644 / CIP 104116 / JCM 14847 / LMG 12228 / 1C / PRS 101 / PAO1).